The sequence spans 231 residues: ATP-dependent dethiobiotin synthetase BioD (231 aa).

Position 12 to 17 (12 to 17) interacts with ATP; the sequence is EVGKTV. Thr-16 lines the Mg(2+) pocket. Residue Lys-37 is part of the active site. Residue Ser-41 participates in substrate binding. Residues Asp-51, 112-115, and 202-204 contribute to the ATP site; these read EGAG and PKL. Mg(2+)-binding residues include Asp-51 and Glu-112.

The protein belongs to the dethiobiotin synthetase family. Homodimer. Mg(2+) is required as a cofactor.

It is found in the cytoplasm. It carries out the reaction (7R,8S)-7,8-diammoniononanoate + CO2 + ATP = (4R,5S)-dethiobiotin + ADP + phosphate + 3 H(+). It participates in cofactor biosynthesis; biotin biosynthesis; biotin from 7,8-diaminononanoate: step 1/2. Functionally, catalyzes a mechanistically unusual reaction, the ATP-dependent insertion of CO2 between the N7 and N8 nitrogen atoms of 7,8-diaminopelargonic acid (DAPA, also called 7,8-diammoniononanoate) to form a ureido ring. This is ATP-dependent dethiobiotin synthetase BioD from Bacillus subtilis (strain 168).